A 130-amino-acid polypeptide reads, in one-letter code: S-adenosylmethionine decarboxylase proenzyme (130 aa).

S64 functions as the Schiff-base intermediate with substrate; via pyruvic acid in the catalytic mechanism. S64 is subject to Pyruvic acid (Ser); by autocatalysis. The active-site Proton acceptor; for processing activity is H69. Residue C84 is the Proton donor; for catalytic activity of the active site.

Belongs to the prokaryotic AdoMetDC family. Type 1 subfamily. In terms of assembly, heterotetramer of two alpha and two beta chains arranged as a dimer of alpha/beta heterodimers. Pyruvate serves as cofactor. Is synthesized initially as an inactive proenzyme. Formation of the active enzyme involves a self-maturation process in which the active site pyruvoyl group is generated from an internal serine residue via an autocatalytic post-translational modification. Two non-identical subunits are generated from the proenzyme in this reaction, and the pyruvate is formed at the N-terminus of the alpha chain, which is derived from the carboxyl end of the proenzyme. The post-translation cleavage follows an unusual pathway, termed non-hydrolytic serinolysis, in which the side chain hydroxyl group of the serine supplies its oxygen atom to form the C-terminus of the beta chain, while the remainder of the serine residue undergoes an oxidative deamination to produce ammonia and the pyruvoyl group blocking the N-terminus of the alpha chain.

The catalysed reaction is S-adenosyl-L-methionine + H(+) = S-adenosyl 3-(methylsulfanyl)propylamine + CO2. It participates in amine and polyamine biosynthesis; S-adenosylmethioninamine biosynthesis; S-adenosylmethioninamine from S-adenosyl-L-methionine: step 1/1. Functionally, catalyzes the decarboxylation of S-adenosylmethionine to S-adenosylmethioninamine (dcAdoMet), the propylamine donor required for the synthesis of the polyamines spermine and spermidine from the diamine putrescine. In Picrophilus torridus (strain ATCC 700027 / DSM 9790 / JCM 10055 / NBRC 100828 / KAW 2/3), this protein is S-adenosylmethionine decarboxylase proenzyme.